The chain runs to 299 residues: Plant-type L-asparaginase (299 aa).

Catalysis depends on Thr-169, which acts as the Nucleophile. Substrate is bound by residues 197–200 and 220–223; these read RVGD and TGVG.

Belongs to the Ntn-hydrolase family. As to quaternary structure, heterotetramer of two alpha and two beta chains arranged as a dimer of alpha/beta heterodimers. The uncleaved protein forms homodimers. Post-translationally, autocleaved. Generates the alpha and beta subunits. The N-terminal residue of the beta subunit is thought to be responsible for the nucleophile hydrolase activity.

The catalysed reaction is L-asparagine + H2O = L-aspartate + NH4(+). With respect to regulation, divalent metal ions and EDTA do not have significant effect on enzyme activity, indicating that activity is metal-independent. Functionally, catalyzes the hydrolysis of L-asparagine into L-aspartate and ammonia. Also displays D-asparaginase activity, which is about 20% of the L-asparaginase activity. Does not exhibit glutaminase activity. The polypeptide is Plant-type L-asparaginase (Pyrobaculum calidifontis (strain DSM 21063 / JCM 11548 / VA1)).